We begin with the raw amino-acid sequence, 174 residues long: Balbiani ring protein 1 (174 aa).

The interval 28-174 is disordered; that stretch reads KCRCTSAGKP…RPEGCGSAMR (147 aa). 8 consecutive repeat copies span residues 42–52, 53–63, 64–74, 75–85, 124–134, 135–145, 146–156, and 157–167. 4 X 11 AA tandem repeats regions lie at residues 42-85 and 124-167; these read EPSK…PRPE. Composition is skewed to basic and acidic residues over residues 49–100 and 121–159; these read PRPE…EKCA and RKSEPSKGSKPRPEKPSKESKPRPEKPSKGSKPRPEKPS.

Salivary gland.

The protein localises to the secreted. Its function is as follows. Used by the larvae to construct a supramolecular structure, the larval tube. The protein is Balbiani ring protein 1 (BR1) of Chironomus tentans (Midge).